A 140-amino-acid chain; its full sequence is Translation initiation factor 2 subunit beta (140 aa).

It belongs to the eIF-2-beta/eIF-5 family. In terms of assembly, heterotrimer composed of an alpha, a beta and a gamma chain.

EIF-2 functions in the early steps of protein synthesis by forming a ternary complex with GTP and initiator tRNA. The sequence is that of Translation initiation factor 2 subunit beta (eif2b) from Pyrococcus horikoshii (strain ATCC 700860 / DSM 12428 / JCM 9974 / NBRC 100139 / OT-3).